A 591-amino-acid chain; its full sequence is V-type ATP synthase alpha chain (591 aa).

233-240 serves as a coordination point for ATP; it reads GPFGAGKT.

Belongs to the ATPase alpha/beta chains family.

The catalysed reaction is ATP + H2O + 4 H(+)(in) = ADP + phosphate + 5 H(+)(out). In terms of biological role, produces ATP from ADP in the presence of a proton gradient across the membrane. The V-type alpha chain is a catalytic subunit. The chain is V-type ATP synthase alpha chain from Streptococcus pneumoniae serotype 19F (strain G54).